Consider the following 509-residue polypeptide: Sorting nexin MVP1 (509 aa).

Over residues 1–25 the composition is skewed to polar residues; sequence MDTYSGQNGWADTSNASPWGDTNDT. The disordered stretch occupies residues 1–28; sequence MDTYSGQNGWADTSNASPWGDTNDTMPI. The 120-residue stretch at 126 to 245 folds into the PX domain; the sequence is QLDIISIEEI…TFLTVPTDLT (120 aa). A 1,2-diacyl-sn-glycero-3-phospho-(1D-myo-inositol-3-phosphate) contacts are provided by arginine 170, serine 172, lysine 196, and arginine 211.

Belongs to the sorting nexin family.

Its subcellular location is the cytoplasm. The protein resides in the membrane. Required for vacuolar protein sorting. This chain is Sorting nexin MVP1 (MVP1), found in Candida glabrata (strain ATCC 2001 / BCRC 20586 / JCM 3761 / NBRC 0622 / NRRL Y-65 / CBS 138) (Yeast).